The following is a 138-amino-acid chain: ATP synthase epsilon chain (138 aa).

The protein belongs to the ATPase epsilon chain family. In terms of assembly, F-type ATPases have 2 components, CF(1) - the catalytic core - and CF(0) - the membrane proton channel. CF(1) has five subunits: alpha(3), beta(3), gamma(1), delta(1), epsilon(1). CF(0) has three main subunits: a, b and c.

Its subcellular location is the cell inner membrane. Produces ATP from ADP in the presence of a proton gradient across the membrane. The chain is ATP synthase epsilon chain from Psychrobacter cryohalolentis (strain ATCC BAA-1226 / DSM 17306 / VKM B-2378 / K5).